The chain runs to 551 residues: Arginine--tRNA ligase (551 aa).

The short motif at 123–133 (ANPTGPLTIGR) is the 'HIGH' region element.

This sequence belongs to the class-I aminoacyl-tRNA synthetase family. As to quaternary structure, monomer.

It is found in the cytoplasm. It carries out the reaction tRNA(Arg) + L-arginine + ATP = L-arginyl-tRNA(Arg) + AMP + diphosphate. This Prosthecochloris aestuarii (strain DSM 271 / SK 413) protein is Arginine--tRNA ligase.